The chain runs to 156 residues: Large ribosomal subunit protein uL22 (156 aa).

Belongs to the universal ribosomal protein uL22 family. As to quaternary structure, part of the 50S ribosomal subunit.

Functionally, this protein binds specifically to 23S rRNA. It makes multiple contacts with different domains of the 23S rRNA in the assembled 50S subunit and ribosome. The globular domain of the protein is located near the polypeptide exit tunnel on the outside of the subunit, while an extended beta-hairpin is found that lines the wall of the exit tunnel in the center of the 70S ribosome. In Aeropyrum pernix (strain ATCC 700893 / DSM 11879 / JCM 9820 / NBRC 100138 / K1), this protein is Large ribosomal subunit protein uL22.